The following is a 642-amino-acid chain: MPLLTRIRGPRDLDRLSLEQLDQLAEEIRTFLVDAVSKTGGHLGPNLGVVELTIALHRVFDSPKDRVLFDTGHQSYVHKLLTGRQDFSKLKMKGGLSGYPSQAESEHDVIENSHASTVLGWADGLAKANQVLERDDHVVAVIGDGALTGGMAWEALNNIAAAKDRPLVIVVNDNERSYAPTIGGLANHLATLRTTDGYERFLARGKDLLERTPVVGRPLYETLHGAKKGLKDFIAPQGMFEDLGLKYVGPIDGHDIEALESALARAKRFGGPVIVHCLTEKGRGYQPALQDEADRFHAVGKIHPDTGLPIASSGADWTSVFGEEMVKLGQERKDIVAITAAMLQPVGLDKFAKVFPKRVYDVGIAEQHAAVSAAGLATGGLHPVFAVYATFLNRAFDQVLMDVALHKCGVTFVLDRAGVTGTDGASHNGMWDMSILQVVPGLRLAAPRDADQVRAQLREAVDVDDAPTVVRFSKGAVGPAVPAVGRIGGMDVLREPGTDAPDVLLVSVGALAPMCLEIAGLLDKQGISATVVDPRWVKPVDEAMAPLAERHRVVVTVEDNSRVGGVGSAIAQALRDAGVDVPLRDFGIPPRFLDHASRGEVMAEIGLTAPDIARQVTGLVSKLDGRFERPTAEIDSVEPARD.

Residues histidine 73 and 113–115 (SHA) contribute to the thiamine diphosphate site. Aspartate 144 is a binding site for Mg(2+). Thiamine diphosphate contacts are provided by residues 145-146 (GA), asparagine 174, tyrosine 285, and glutamate 366. Residue asparagine 174 coordinates Mg(2+).

This sequence belongs to the transketolase family. DXPS subfamily. As to quaternary structure, homodimer. The cofactor is Mg(2+). It depends on thiamine diphosphate as a cofactor.

It carries out the reaction D-glyceraldehyde 3-phosphate + pyruvate + H(+) = 1-deoxy-D-xylulose 5-phosphate + CO2. It functions in the pathway metabolic intermediate biosynthesis; 1-deoxy-D-xylulose 5-phosphate biosynthesis; 1-deoxy-D-xylulose 5-phosphate from D-glyceraldehyde 3-phosphate and pyruvate: step 1/1. Functionally, catalyzes the acyloin condensation reaction between C atoms 2 and 3 of pyruvate and glyceraldehyde 3-phosphate to yield 1-deoxy-D-xylulose-5-phosphate (DXP). This Streptomyces avermitilis (strain ATCC 31267 / DSM 46492 / JCM 5070 / NBRC 14893 / NCIMB 12804 / NRRL 8165 / MA-4680) protein is 1-deoxy-D-xylulose-5-phosphate synthase 2.